Reading from the N-terminus, the 348-residue chain is Zinc finger protein 843 (348 aa).

The C2H2-type 1 zinc finger occupies 33–55 (CKCKACGRGFTQSASLLQHWRVH). The C2H2-type 2; degenerate zinc-finger motif lies at 145 to 167 (FCCCSCGDSVNEKTSLSQRVLPH). Polar residues predominate over residues 184–195 (APSSVAPDSTSG). Disordered regions lie at residues 184 to 203 (APSSVAPDSTSGLRPCGSPG) and 256 to 329 (ATQP…WRGA).

The chain is Zinc finger protein 843 (ZNF843) from Homo sapiens (Human).